Consider the following 421-residue polypeptide: DUF724 domain-containing protein 8 (421 aa).

2 stretches are compositionally biased toward polar residues: residues 149–165 (TQGSGDKTGDSVRNANE) and 199–213 (PRNQNGSGNDSTLEN). Residues 149–229 (TQGSGDKTGD…NRKRKREENL (81 aa)) form a disordered region. Residues 246 to 420 (VLPFEKKLRI…LEFLATASAP (175 aa)) enclose the DUF724 domain. Residues 361-397 (EKVTAEKESVKAENKRKILELQRLNEEMDKEIAQSKS) are a coiled coil.

Expressed in leaves and flowers, and at lower levels in roots, stems and siliques.

It is found in the nucleus. Its function is as follows. May be involved in the polar growth of plant cells via transportation of RNAs. This is DUF724 domain-containing protein 8 from Arabidopsis thaliana (Mouse-ear cress).